We begin with the raw amino-acid sequence, 651 residues long: Probable potassium transport system protein Kup (651 aa).

12 helical membrane-spanning segments follow: residues 41–61 (LVLG…IYAF), 82–102 (VVSL…VLFV), 130–150 (LILG…VITP), 163–183 (IVAP…LVTL), 194–214 (VAIV…ASGL), 235–255 (FLTV…LAMT), 276–296 (WLWI…AFIL), 309–329 (MIPS…TVIA), 366–386 (IYIP…VLGF), 395–415 (AYGI…YIAM), 426–446 (ALPI…ANII), and 450–470 (EGGW…WTWV).

Belongs to the HAK/KUP transporter (TC 2.A.72) family.

Its subcellular location is the cell inner membrane. It catalyses the reaction K(+)(in) + H(+)(in) = K(+)(out) + H(+)(out). In terms of biological role, transport of potassium into the cell. Likely operates as a K(+):H(+) symporter. The protein is Probable potassium transport system protein Kup of Brucella abortus (strain S19).